The following is a 277-amino-acid chain: Putative phosphoenolpyruvate synthase regulatory protein (277 aa).

157–164 is an ADP binding site; sequence GVSRCGKT.

The protein belongs to the pyruvate, phosphate/water dikinase regulatory protein family. PSRP subfamily.

It catalyses the reaction [pyruvate, water dikinase] + ADP = [pyruvate, water dikinase]-phosphate + AMP + H(+). It carries out the reaction [pyruvate, water dikinase]-phosphate + phosphate + H(+) = [pyruvate, water dikinase] + diphosphate. In terms of biological role, bifunctional serine/threonine kinase and phosphorylase involved in the regulation of the phosphoenolpyruvate synthase (PEPS) by catalyzing its phosphorylation/dephosphorylation. The chain is Putative phosphoenolpyruvate synthase regulatory protein from Enterobacter sp. (strain 638).